A 412-amino-acid chain; its full sequence is Serine hydroxymethyltransferase (412 aa).

(6S)-5,6,7,8-tetrahydrofolate is bound by residues Leu117 and 121-123; that span reads GHL. Lys226 is modified (N6-(pyridoxal phosphate)lysine).

The protein belongs to the SHMT family. In terms of assembly, homodimer. Pyridoxal 5'-phosphate serves as cofactor.

Its subcellular location is the cytoplasm. It catalyses the reaction (6R)-5,10-methylene-5,6,7,8-tetrahydrofolate + glycine + H2O = (6S)-5,6,7,8-tetrahydrofolate + L-serine. It functions in the pathway one-carbon metabolism; tetrahydrofolate interconversion. Its pathway is amino-acid biosynthesis; glycine biosynthesis; glycine from L-serine: step 1/1. Catalyzes the reversible interconversion of serine and glycine with tetrahydrofolate (THF) serving as the one-carbon carrier. This reaction serves as the major source of one-carbon groups required for the biosynthesis of purines, thymidylate, methionine, and other important biomolecules. Also exhibits THF-independent aldolase activity toward beta-hydroxyamino acids, producing glycine and aldehydes, via a retro-aldol mechanism. In Staphylococcus epidermidis (strain ATCC 35984 / DSM 28319 / BCRC 17069 / CCUG 31568 / BM 3577 / RP62A), this protein is Serine hydroxymethyltransferase.